Consider the following 301-residue polypeptide: Quinolinate synthase (301 aa).

His21 and Ser38 together coordinate iminosuccinate. Position 83 (Cys83) interacts with [4Fe-4S] cluster. Iminosuccinate contacts are provided by residues 109–111 (YIN) and Ser126. Cys169 serves as a coordination point for [4Fe-4S] cluster. Iminosuccinate is bound by residues 195–197 (HPE) and Thr212. Cys257 is a [4Fe-4S] cluster binding site.

The protein belongs to the quinolinate synthase family. Type 2 subfamily. The cofactor is [4Fe-4S] cluster.

The protein resides in the cytoplasm. The enzyme catalyses iminosuccinate + dihydroxyacetone phosphate = quinolinate + phosphate + 2 H2O + H(+). The protein operates within cofactor biosynthesis; NAD(+) biosynthesis; quinolinate from iminoaspartate: step 1/1. Catalyzes the condensation of iminoaspartate with dihydroxyacetone phosphate to form quinolinate. The chain is Quinolinate synthase from Clostridium perfringens (strain SM101 / Type A).